The primary structure comprises 150 residues: MKLINAYTDGSCLGNPGPGGWAVLLRYKNNEKELVGGELDTTNNRMELMAAIMALERLSEPCQIKLHTDSQYVRQGITEWMSGWVRRGWKTAAGDPVKNRDLWERLCAATQRHMIEWCWVKAHNGDSDNERVDVLARGQAMAQRSTVASR.

Residues 1–141 (MKLINAYTDG…VDVLARGQAM (141 aa)) form the RNase H type-1 domain. Mg(2+) contacts are provided by D9, E47, D69, and D133.

It belongs to the RNase H family. Monomer. It depends on Mg(2+) as a cofactor.

It is found in the cytoplasm. It carries out the reaction Endonucleolytic cleavage to 5'-phosphomonoester.. Endonuclease that specifically degrades the RNA of RNA-DNA hybrids. This chain is Ribonuclease HI, found in Xylella fastidiosa (strain Temecula1 / ATCC 700964).